Here is a 65-residue protein sequence, read N- to C-terminus: Large ribosomal subunit protein bL33c (65 aa).

It belongs to the bacterial ribosomal protein bL33 family.

Its subcellular location is the plastid. The polypeptide is Large ribosomal subunit protein bL33c (Aneura mirabilis (Parasitic liverwort)).